The primary structure comprises 469 residues: Neuraminidase (469 aa).

Residues 1-6 (MNPNQK) lie on the Intravirion side of the membrane. Residues 7 to 29 (IITIGSVSLTIATICFLMQIAIQ) traverse the membrane as a helical segment. Residues 11–33 (GSVSLTIATICFLMQIAIQVTTV) form an involved in apical transport and lipid raft association region. The Virion surface portion of the chain corresponds to 30–469 (VTTVTLHFKQ…DGADINLMPI (440 aa)). The hypervariable stalk region stretch occupies residues 36 to 88 (HFKQYECDSPANNQVMPCEPIIIERNITEIVYLTNTTIEKEICPKLVEYRNWS). N-linked (GlcNAc...) asparagine; by host glycosylation is found at Asn-61, Asn-70, and Asn-86. The tract at residues 91–469 (QCKITGFAPF…DGADINLMPI (379 aa)) is head of neuraminidase. 8 disulfide bridges follow: Cys-92/Cys-417, Cys-124/Cys-129, Cys-183/Cys-230, Cys-232/Cys-237, Cys-278/Cys-291, Cys-280/Cys-289, Cys-318/Cys-337, and Cys-421/Cys-447. Substrate is bound at residue Arg-118. N-linked (GlcNAc...) asparagine; by host glycosylation occurs at Asn-146. Catalysis depends on Asp-151, which acts as the Proton donor/acceptor. Position 152 (Arg-152) interacts with substrate. Residues Asn-200 and Asn-234 are each glycosylated (N-linked (GlcNAc...) asparagine; by host). A substrate-binding site is contributed by 276 to 277 (EE). Arg-292 is a binding site for substrate. Asp-293, Gly-297, and Asp-324 together coordinate Ca(2+). Arg-371 contacts substrate. N-linked (GlcNAc...) asparagine; by host glycosylation is present at Asn-402. Tyr-406 functions as the Nucleophile in the catalytic mechanism.

It belongs to the glycosyl hydrolase 34 family. As to quaternary structure, homotetramer. Ca(2+) is required as a cofactor. In terms of processing, N-glycosylated.

The protein resides in the virion membrane. Its subcellular location is the host apical cell membrane. It catalyses the reaction Hydrolysis of alpha-(2-&gt;3)-, alpha-(2-&gt;6)-, alpha-(2-&gt;8)- glycosidic linkages of terminal sialic acid residues in oligosaccharides, glycoproteins, glycolipids, colominic acid and synthetic substrates.. Inhibited by the neuraminidase inhibitors zanamivir (Relenza) and oseltamivir (Tamiflu). These drugs interfere with the release of progeny virus from infected cells and are effective against all influenza strains. Resistance to neuraminidase inhibitors is quite rare. Its function is as follows. Catalyzes the removal of terminal sialic acid residues from viral and cellular glycoconjugates. Cleaves off the terminal sialic acids on the glycosylated HA during virus budding to facilitate virus release. Additionally helps virus spread through the circulation by further removing sialic acids from the cell surface. These cleavages prevent self-aggregation and ensure the efficient spread of the progeny virus from cell to cell. Otherwise, infection would be limited to one round of replication. Described as a receptor-destroying enzyme because it cleaves a terminal sialic acid from the cellular receptors. May facilitate viral invasion of the upper airways by cleaving the sialic acid moieties on the mucin of the airway epithelial cells. Likely to plays a role in the budding process through its association with lipid rafts during intracellular transport. May additionally display a raft-association independent effect on budding. Plays a role in the determination of host range restriction on replication and virulence. Sialidase activity in late endosome/lysosome traffic seems to enhance virus replication. In Aves (whales), this protein is Neuraminidase.